The following is a 407-amino-acid chain: Arrestin red cell isoform 1 (407 aa).

It belongs to the arrestin family.

Its subcellular location is the cytoplasm. The sequence is that of Arrestin red cell isoform 1 from Oncorhynchus mykiss (Rainbow trout).